We begin with the raw amino-acid sequence, 1032 residues long: Y' element ATP-dependent helicase YPR204W (1032 aa).

Residues 1–175 enclose the Helicase ATP-binding domain; that stretch reads MADTPSVAVQ…LQRIGLTGLA (175 aa). 11–18 is an ATP binding site; it reads APPGYGKT. The DEAH box signature appears at 121 to 124; the sequence is DEFH. Residues 232–381 enclose the Helicase C-terminal domain; the sequence is KLLLALFEIE…EFYGLESKKG (150 aa). Low complexity predominate over residues 455–634; sequence ANASTNATTN…ATTTESTNAS (180 aa). A disordered region spans residues 455–658; it reads ANASTNATTN…RFHPVTDINK (204 aa). A compositionally biased stretch (basic and acidic residues) spans 635–658; the sequence is AKEDANKDGNAEDNRFHPVTDINK.

It belongs to the helicase family. Yeast subtelomeric Y' repeat subfamily.

Its function is as follows. Catalyzes DNA unwinding and is involved in telomerase-independent telomere maintenance. The chain is Y' element ATP-dependent helicase YPR204W from Saccharomyces cerevisiae (strain ATCC 204508 / S288c) (Baker's yeast).